We begin with the raw amino-acid sequence, 335 residues long: MENLQLVLFVLGAVAIIAVLVHGFWSIRRQQPKSLKESPMTGLYTDKTRDSDGFDADGVGPVRVVKNNAEQGIPKATSTSRATPFGARAQESEPADVSPSFSLSDEPKQKAPRSRQEPVMSATPNEEVSDAHLEQMELGLGQAPAQPSLFEDPVTERKQEAVRPAPRVEAPQSVAPASVEPVSVEPEPAPKVAEETPLGDPQDVLVLHVVAKEGEALNGAELLPSLLTLNFKFGDMDIFHRHEDNAGTGKVLFSLANMVKPGVFNPDEMEQFTTQGIVLFMTLPCYGDPLMNFSIMLNSAHQLADDLGGEVLDGGRGAWSEQTKQSYLQRIRAQM.

Topologically, residues Met1 to Leu6 are periplasmic. A helical membrane pass occupies residues Val7 to Ile27. Residues Arg28–Met335 are Cytoplasmic-facing. Disordered stretches follow at residues Glu37–Val128 and Arg163–Glu185. Residues Ala170–Glu185 are compositionally biased toward low complexity.

This sequence belongs to the ZipA family. Interacts with FtsZ via their C-terminal domains.

The protein resides in the cell inner membrane. Essential cell division protein that stabilizes the FtsZ protofilaments by cross-linking them and that serves as a cytoplasmic membrane anchor for the Z ring. Also required for the recruitment to the septal ring of downstream cell division proteins. The polypeptide is Cell division protein ZipA (Shewanella loihica (strain ATCC BAA-1088 / PV-4)).